The chain runs to 69 residues: MTIARGDFVRIKRKESYWYNDTGKVASIDKSGIKYNVTVKFDRVNFYGISGTDGGNVTNNFAEVELEKI.

The protein belongs to the PsaE family.

It is found in the cellular thylakoid membrane. Its function is as follows. Stabilizes the interaction between PsaC and the PSI core, assists the docking of the ferredoxin to PSI and interacts with ferredoxin-NADP oxidoreductase. In Prochlorococcus marinus (strain MIT 9515), this protein is Photosystem I reaction center subunit IV.